We begin with the raw amino-acid sequence, 466 residues long: MLPAGPAALSRRARQDKVCRRPSTGCSASLDSLPSEVLLKILSYLDAAALLCAGCVNRRFYHLANDNFIWIRIYSTAFSPRRSHWRVDPAEKTDLSVNLLSAGDKEAGYWKKEYLTKQIASVKAALARVLKPLHPHTGLPVKTKEALRVSGLGWVIILRAADGREYTMEHADLSVNDSSVTVVWYGKDWPPLATLSTLDLCGATPVFMGQSRTPSRIRPRWHSLITKYQLSQLTESSAVGGDRLMRVFCLPPGLVVGLWKREEELAFVMANLHLHCLVERSMLGSPAVPYELPPHTPVSDDSPERGLHGYRLHVDMHSGGASCLCGSFHNLSASKGYLENEYMKLTVISFKNNTEHLPLIGKVGLSWKTNSFDGCIKSCSIMDLTLLEEYGKPFWCFSSPVCVRCCPGPSDGPSFLGEAYCVDYSDSEGRLHMELVWVEETEEYFIVSLALYLRLAKVNQWFGTQY.

In terms of domain architecture, F-box spans 27 to 73 (SASLDSLPSEVLLKILSYLDAAALLCAGCVNRRFYHLANDNFIWIRI).

Directly interacts with SKP1 and CUL1.

Functionally, substrate-recognition component of the SCF (SKP1-CUL1-F-box protein)-type E3 ubiquitin ligase complex. This Bos taurus (Bovine) protein is F-box only protein 15 (FBXO15).